Here is a 587-residue protein sequence, read N- to C-terminus: Glucosylglycerate phosphorylase (587 aa).

The active-site Nucleophile is the Asp236.

This sequence belongs to the glycosyl hydrolase 13 family. Glucosylglycerate phosphorylase subfamily.

It catalyses the reaction (2R)-2-O-(alpha-D-glucopyranosyl)-glycerate + phosphate = (R)-glycerate + alpha-D-glucose 1-phosphate. Its function is as follows. Catalyzes the reversible phosphorolysis of glucosylglycerate into alpha-D-glucose 1-phosphate (Glc1P) and D-glycerate. May be a regulator of intracellular levels of glucosylglycerate, a compatible solute that primarily protects organisms facing salt stress and very specific nutritional constraints. Cannot catalyze the phosphorolysis of sucrose. This chain is Glucosylglycerate phosphorylase, found in Spirochaeta thermophila (strain ATCC 700085 / DSM 6578 / Z-1203).